The chain runs to 54 residues: UPF0391 membrane protein Daro_2080 (54 aa).

2 consecutive transmembrane segments (helical) span residues 5–25 and 30–50; these read AIVF…GIAA and IAKI…VMGF.

Belongs to the UPF0391 family.

Its subcellular location is the cell membrane. This chain is UPF0391 membrane protein Daro_2080, found in Dechloromonas aromatica (strain RCB).